We begin with the raw amino-acid sequence, 263 residues long: Pimeloyl-[acyl-carrier protein] methyl ester esterase (263 aa).

Substrate contacts are provided by residues Trp-28, 86–87 (SL), and 149–153 (FLAIQ). Residue Ser-86 is the Nucleophile of the active site. Active-site residues include Asp-213 and His-240. His-240 contributes to the substrate binding site.

Belongs to the AB hydrolase superfamily. Carboxylesterase BioH family. As to quaternary structure, monomer.

The protein localises to the cytoplasm. The catalysed reaction is 6-carboxyhexanoyl-[ACP] methyl ester + H2O = 6-carboxyhexanoyl-[ACP] + methanol + H(+). Its pathway is cofactor biosynthesis; biotin biosynthesis. Functionally, the physiological role of BioH is to remove the methyl group introduced by BioC when the pimeloyl moiety is complete. It allows to synthesize pimeloyl-ACP via the fatty acid synthetic pathway through the hydrolysis of the ester bonds of pimeloyl-ACP esters. The sequence is that of Pimeloyl-[acyl-carrier protein] methyl ester esterase from Shewanella oneidensis (strain ATCC 700550 / JCM 31522 / CIP 106686 / LMG 19005 / NCIMB 14063 / MR-1).